We begin with the raw amino-acid sequence, 198 residues long: tRNA (pseudouridine(54)-N(1))-methyltransferase (198 aa).

S-adenosyl-L-methionine-binding residues include Leu134 and Gly155.

The protein belongs to the methyltransferase superfamily. TrmY family. As to quaternary structure, homodimer.

The protein localises to the cytoplasm. The catalysed reaction is pseudouridine(54) in tRNA + S-adenosyl-L-methionine = N(1)-methylpseudouridine(54) in tRNA + S-adenosyl-L-homocysteine + H(+). In terms of biological role, specifically catalyzes the N1-methylation of pseudouridine at position 54 (Psi54) in tRNAs. This is tRNA (pseudouridine(54)-N(1))-methyltransferase from Thermococcus kodakarensis (strain ATCC BAA-918 / JCM 12380 / KOD1) (Pyrococcus kodakaraensis (strain KOD1)).